Reading from the N-terminus, the 361-residue chain is MVQPVFDAAVLSGRADIPSQFIWPEGESPTPDAAEELHVPLIDIGGMLSGDPAAAAEVTRLVGEACERHGFFQVVNHGIDAELLADAHRCVDNFFTMPLPEKQRALRHPGESCGYASSFTGRFASKLPWKETLSFRSCPSDPALVVDYIVATLGEDHRRLGEVYARYCSEMSRLSLEIMEVLGESLGVGRAHYRRFFEGNDSIMRLNYYPPCQRPLETLGTGPHCDPTSLTILHQDNVGGLQVHTEGRWRSIRPRADAFVVNIGDTFMALSNGRYKSCLHRAVVNSRVPRKSLAFFLCPEMDKVVAPPGTLVDAANPRAYPDFTWRSLLDFTQKHYRADMKTLEVFSSWIVQQQQPQPART.

A Fe2OG dioxygenase domain is found at 199–299; that stretch reads GNDSIMRLNY…RKSLAFFLCP (101 aa). Positions 224, 226, and 280 each coordinate Fe cation. The active site involves Arg290.

It belongs to the iron/ascorbate-dependent oxidoreductase family. GA20OX subfamily. The cofactor is Fe cation. L-ascorbate is required as a cofactor. Expressed in nodes and the ear of the elongating stem.

The enzyme catalyses gibberellin A12 + 2 2-oxoglutarate + 3 O2 + H(+) = gibberellin A9 + 2 succinate + 3 CO2 + 2 H2O. It catalyses the reaction gibberellin A53 + 2 2-oxoglutarate + 3 O2 + H(+) = gibberellin A20 + 2 succinate + 3 CO2 + 2 H2O. Key oxidase enzyme in the biosynthesis of gibberellin that catalyzes the conversion of GA12 and GA53 to GA9 and GA20 respectively, via a three-step oxidation at C-20 of the GA skeleton. The protein is Gibberellin 20 oxidase 1-D (GA20ox1D) of Triticum aestivum (Wheat).